The sequence spans 503 residues: Probable 2-isopropylmalate synthase (503 aa).

Residues 8 to 259 form the Pyruvate carboxyltransferase domain; that stretch reads IRVFDTTLRD…KTNIKTEHLF (252 aa). Residues Asp-17, His-197, His-199, and Asn-233 each coordinate a divalent metal cation.

The protein belongs to the alpha-IPM synthase/homocitrate synthase family. Homodimer. The cofactor is a divalent metal cation.

It catalyses the reaction 3-methyl-2-oxobutanoate + acetyl-CoA + H2O = (2S)-2-isopropylmalate + CoA + H(+). It participates in amino-acid biosynthesis; L-leucine biosynthesis; L-leucine from 3-methyl-2-oxobutanoate: step 1/4. Catalyzes the condensation of the acetyl group of acetyl-CoA with 3-methyl-2-oxobutanoate (2-oxoisovalerate) to form 3-carboxy-3-hydroxy-4-methylpentanoate (2-isopropylmalate). The protein is Probable 2-isopropylmalate synthase (leuA) of Archaeoglobus fulgidus (strain ATCC 49558 / DSM 4304 / JCM 9628 / NBRC 100126 / VC-16).